A 193-amino-acid chain; its full sequence is Biphenyl dioxygenase subunit beta (193 aa).

The protein belongs to the bacterial ring-hydroxylating dioxygenase beta subunit family. Heterohexamer consisting of 3 BphA1 subunits and 3 BphA2 subunits. A ferredoxin (BphA3) and a ferredoxin reductase (BphA4) must be present to obtain activity.

The enzyme catalyses biphenyl + NADH + O2 + H(+) = (2R,3S)-3-phenylcyclohexa-3,5-diene-1,2-diol + NAD(+). The protein operates within xenobiotic degradation; biphenyl degradation; 2-hydroxy-2,4-pentadienoate and benzoate from biphenyl: step 1/4. Functionally, the beta subunit may be responsible for the substrate specificity of the enzyme. The polypeptide is Biphenyl dioxygenase subunit beta (bphA2) (Pseudomonas sp. (strain KKS102)).